A 215-amino-acid chain; its full sequence is Pyrrolidone-carboxylate peptidase (215 aa).

Catalysis depends on residues E80, C143, and H167.

This sequence belongs to the peptidase C15 family. Homotetramer.

It localises to the cytoplasm. The catalysed reaction is Release of an N-terminal pyroglutamyl group from a polypeptide, the second amino acid generally not being Pro.. Functionally, removes 5-oxoproline from various penultimate amino acid residues except L-proline. In Bacillus cereus (strain G9842), this protein is Pyrrolidone-carboxylate peptidase.